The following is a 170-amino-acid chain: Peptide deformylase 2 (170 aa).

Residues cysteine 94 and histidine 136 each contribute to the Fe cation site. Glutamate 137 is a catalytic residue. Residue histidine 140 participates in Fe cation binding.

The protein belongs to the polypeptide deformylase family. Fe(2+) serves as cofactor.

It catalyses the reaction N-terminal N-formyl-L-methionyl-[peptide] + H2O = N-terminal L-methionyl-[peptide] + formate. Its function is as follows. Removes the formyl group from the N-terminal Met of newly synthesized proteins. Requires at least a dipeptide for an efficient rate of reaction. N-terminal L-methionine is a prerequisite for activity but the enzyme has broad specificity at other positions. In Xanthomonas campestris pv. campestris (strain ATCC 33913 / DSM 3586 / NCPPB 528 / LMG 568 / P 25), this protein is Peptide deformylase 2.